We begin with the raw amino-acid sequence, 459 residues long: Asparagine--tRNA ligase (459 aa).

The protein belongs to the class-II aminoacyl-tRNA synthetase family. In terms of assembly, homodimer.

The protein localises to the cytoplasm. The catalysed reaction is tRNA(Asn) + L-asparagine + ATP = L-asparaginyl-tRNA(Asn) + AMP + diphosphate + H(+). This is Asparagine--tRNA ligase from Pelobacter propionicus (strain DSM 2379 / NBRC 103807 / OttBd1).